Consider the following 475-residue polypeptide: Ribulose bisphosphate carboxylase large chain (475 aa).

The propeptide occupies 1 to 2 (MS). Proline 3 is modified (N-acetylproline). An N6,N6,N6-trimethyllysine modification is found at lysine 14. Substrate contacts are provided by asparagine 123 and threonine 173. The active-site Proton acceptor is lysine 175. Lysine 177 serves as a coordination point for substrate. Positions 201, 203, and 204 each coordinate Mg(2+). At lysine 201 the chain carries N6-carboxylysine. The active-site Proton acceptor is histidine 294. Substrate-binding residues include histidine 327 and serine 379.

The protein belongs to the RuBisCO large chain family. Type I subfamily. As to quaternary structure, heterohexadecamer of 8 large chains and 8 small chains; disulfide-linked. The disulfide link is formed within the large subunit homodimers. Mg(2+) serves as cofactor. The disulfide bond which can form in the large chain dimeric partners within the hexadecamer appears to be associated with oxidative stress and protein turnover.

It is found in the plastid. The protein resides in the chloroplast. It catalyses the reaction 2 (2R)-3-phosphoglycerate + 2 H(+) = D-ribulose 1,5-bisphosphate + CO2 + H2O. It carries out the reaction D-ribulose 1,5-bisphosphate + O2 = 2-phosphoglycolate + (2R)-3-phosphoglycerate + 2 H(+). Functionally, ruBisCO catalyzes two reactions: the carboxylation of D-ribulose 1,5-bisphosphate, the primary event in carbon dioxide fixation, as well as the oxidative fragmentation of the pentose substrate in the photorespiration process. Both reactions occur simultaneously and in competition at the same active site. In Amaranthus hypochondriacus (Prince-of-Wales feather), this protein is Ribulose bisphosphate carboxylase large chain.